Reading from the N-terminus, the 137-residue chain is Large ribosomal subunit protein uL16 (137 aa).

Belongs to the universal ribosomal protein uL16 family. In terms of assembly, part of the 50S ribosomal subunit.

Binds 23S rRNA and is also seen to make contacts with the A and possibly P site tRNAs. The chain is Large ribosomal subunit protein uL16 from Methylocella silvestris (strain DSM 15510 / CIP 108128 / LMG 27833 / NCIMB 13906 / BL2).